We begin with the raw amino-acid sequence, 255 residues long: Thiazole synthase (255 aa).

The active-site Schiff-base intermediate with DXP is K96. 1-deoxy-D-xylulose 5-phosphate is bound by residues G157, 183-184 (AG), and 205-206 (NT).

This sequence belongs to the ThiG family. As to quaternary structure, homotetramer. Forms heterodimers with either ThiH or ThiS.

The protein resides in the cytoplasm. It carries out the reaction [ThiS sulfur-carrier protein]-C-terminal-Gly-aminoethanethioate + 2-iminoacetate + 1-deoxy-D-xylulose 5-phosphate = [ThiS sulfur-carrier protein]-C-terminal Gly-Gly + 2-[(2R,5Z)-2-carboxy-4-methylthiazol-5(2H)-ylidene]ethyl phosphate + 2 H2O + H(+). It participates in cofactor biosynthesis; thiamine diphosphate biosynthesis. Catalyzes the rearrangement of 1-deoxy-D-xylulose 5-phosphate (DXP) to produce the thiazole phosphate moiety of thiamine. Sulfur is provided by the thiocarboxylate moiety of the carrier protein ThiS. In vitro, sulfur can be provided by H(2)S. The polypeptide is Thiazole synthase (Geobacillus sp. (strain WCH70)).